Here is a 491-residue protein sequence, read N- to C-terminus: Ketol-acid reductoisomerase (NADP(+)) (491 aa).

The KARI N-terminal Rossmann domain occupies 14 to 208; the sequence is LKHLGKCRFM…GSHRAGVLES (195 aa). NADP(+) contacts are provided by residues 45–48, arginine 68, and serine 78; that span reads CGSQ. Histidine 132 is an active-site residue. Residue glycine 158 participates in NADP(+) binding. KARI C-terminal knotted domains are found at residues 209-344 and 345-485; these read SFVA…QAPN and YQQE…MQNM. Aspartate 217, glutamate 221, glutamate 389, and glutamate 393 together coordinate Mg(2+). Residue serine 414 participates in substrate binding.

The protein belongs to the ketol-acid reductoisomerase family. It depends on Mg(2+) as a cofactor.

The catalysed reaction is (2R)-2,3-dihydroxy-3-methylbutanoate + NADP(+) = (2S)-2-acetolactate + NADPH + H(+). It catalyses the reaction (2R,3R)-2,3-dihydroxy-3-methylpentanoate + NADP(+) = (S)-2-ethyl-2-hydroxy-3-oxobutanoate + NADPH + H(+). Its pathway is amino-acid biosynthesis; L-isoleucine biosynthesis; L-isoleucine from 2-oxobutanoate: step 2/4. The protein operates within amino-acid biosynthesis; L-valine biosynthesis; L-valine from pyruvate: step 2/4. Functionally, involved in the biosynthesis of branched-chain amino acids (BCAA). Catalyzes an alkyl-migration followed by a ketol-acid reduction of (S)-2-acetolactate (S2AL) to yield (R)-2,3-dihydroxy-isovalerate. In the isomerase reaction, S2AL is rearranged via a Mg-dependent methyl migration to produce 3-hydroxy-3-methyl-2-ketobutyrate (HMKB). In the reductase reaction, this 2-ketoacid undergoes a metal-dependent reduction by NADPH to yield (R)-2,3-dihydroxy-isovalerate. The polypeptide is Ketol-acid reductoisomerase (NADP(+)) (Blochmanniella pennsylvanica (strain BPEN)).